The chain runs to 258 residues: UPF0246 protein YaaA (258 aa).

It belongs to the UPF0246 family.

This chain is UPF0246 protein YaaA, found in Shigella flexneri serotype 5b (strain 8401).